The following is a 217-amino-acid chain: Phosphoribosylformylglycinamidine synthase subunit PurQ (217 aa).

The Glutamine amidotransferase type-1 domain maps to 2 to 217; the sequence is NIGIIVFPGS…GKSILSTLLS (216 aa). Cys86 serves as the catalytic Nucleophile. Active-site residues include His194 and Glu196.

As to quaternary structure, part of the FGAM synthase complex composed of 1 PurL, 1 PurQ and 2 PurS subunits.

The protein localises to the cytoplasm. It catalyses the reaction N(2)-formyl-N(1)-(5-phospho-beta-D-ribosyl)glycinamide + L-glutamine + ATP + H2O = 2-formamido-N(1)-(5-O-phospho-beta-D-ribosyl)acetamidine + L-glutamate + ADP + phosphate + H(+). It carries out the reaction L-glutamine + H2O = L-glutamate + NH4(+). Its pathway is purine metabolism; IMP biosynthesis via de novo pathway; 5-amino-1-(5-phospho-D-ribosyl)imidazole from N(2)-formyl-N(1)-(5-phospho-D-ribosyl)glycinamide: step 1/2. In terms of biological role, part of the phosphoribosylformylglycinamidine synthase complex involved in the purines biosynthetic pathway. Catalyzes the ATP-dependent conversion of formylglycinamide ribonucleotide (FGAR) and glutamine to yield formylglycinamidine ribonucleotide (FGAM) and glutamate. The FGAM synthase complex is composed of three subunits. PurQ produces an ammonia molecule by converting glutamine to glutamate. PurL transfers the ammonia molecule to FGAR to form FGAM in an ATP-dependent manner. PurS interacts with PurQ and PurL and is thought to assist in the transfer of the ammonia molecule from PurQ to PurL. This Prochlorococcus marinus (strain NATL2A) protein is Phosphoribosylformylglycinamidine synthase subunit PurQ.